A 316-amino-acid polypeptide reads, in one-letter code: Ninja-family protein 2 (316 aa).

Disordered stretches follow at residues 1–29 and 72–236; these read MASRDFLGRFGGEKGSSSDKAGGGAGEPD and TSDD…TSTG. Basic and acidic residues predominate over residues 99–108; it reads ERWRRREMQS. Residues 156-166 are compositionally biased toward polar residues; sequence DQGNTSSSMPE. Low complexity-rich tracts occupy residues 179 to 199 and 222 to 235; these read SSMEISSDNNNNNNASNQNKS and LRTLRSLTMRTTST.

It belongs to the Ninja family.

It localises to the nucleus. The sequence is that of Ninja-family protein 2 (AFP-B1) from Triticum aestivum (Wheat).